The chain runs to 75 residues: Cytochrome c oxidase subunit 6C (75 aa).

Residues 1–13 (MASSALAKPQMRG) are Mitochondrial matrix-facing. Residues 14–54 (LLARRLRIHIVGAFVVSLGVAAFYKYAVAEPRKKAYADFYR) form a helical membrane-spanning segment. The Mitochondrial intermembrane segment spans residues 55 to 75 (NYDSVKYFEEMRKAGVFQSVK).

Belongs to the cytochrome c oxidase subunit 6c family. Component of the cytochrome c oxidase (complex IV, CIV), a multisubunit enzyme composed of 14 subunits. The complex is composed of a catalytic core of 3 subunits MT-CO1, MT-CO2 and MT-CO3, encoded in the mitochondrial DNA, and 11 supernumerary subunits COX4I, COX5A, COX5B, COX6A, COX6B, COX6C, COX7A, COX7B, COX7C, COX8 and NDUFA4, which are encoded in the nuclear genome. The complex exists as a monomer or a dimer and forms supercomplexes (SCs) in the inner mitochondrial membrane with NADH-ubiquinone oxidoreductase (complex I, CI) and ubiquinol-cytochrome c oxidoreductase (cytochrome b-c1 complex, complex III, CIII), resulting in different assemblies (supercomplex SCI(1)III(2)IV(1) and megacomplex MCI(2)III(2)IV(2)).

The protein resides in the mitochondrion inner membrane. Its pathway is energy metabolism; oxidative phosphorylation. Its function is as follows. Component of the cytochrome c oxidase, the last enzyme in the mitochondrial electron transport chain which drives oxidative phosphorylation. The respiratory chain contains 3 multisubunit complexes succinate dehydrogenase (complex II, CII), ubiquinol-cytochrome c oxidoreductase (cytochrome b-c1 complex, complex III, CIII) and cytochrome c oxidase (complex IV, CIV), that cooperate to transfer electrons derived from NADH and succinate to molecular oxygen, creating an electrochemical gradient over the inner membrane that drives transmembrane transport and the ATP synthase. Cytochrome c oxidase is the component of the respiratory chain that catalyzes the reduction of oxygen to water. Electrons originating from reduced cytochrome c in the intermembrane space (IMS) are transferred via the dinuclear copper A center (CU(A)) of subunit 2 and heme A of subunit 1 to the active site in subunit 1, a binuclear center (BNC) formed by heme A3 and copper B (CU(B)). The BNC reduces molecular oxygen to 2 water molecules using 4 electrons from cytochrome c in the IMS and 4 protons from the mitochondrial matrix. The chain is Cytochrome c oxidase subunit 6C (COX6C) from Nycticebus coucang (Slow loris).